Consider the following 362-residue polypeptide: Adenosine deaminase (362 aa).

Residues His-19 and His-21 each coordinate Zn(2+). Substrate is bound by residues His-21, Asp-23, and Gly-181. His-208 serves as a coordination point for Zn(2+). The active-site Proton donor is Glu-211. Asp-300 serves as a coordination point for Zn(2+).

This sequence belongs to the metallo-dependent hydrolases superfamily. Adenosine and AMP deaminases family. Adenosine deaminase subfamily. The cofactor is Zn(2+).

It catalyses the reaction adenosine + H2O + H(+) = inosine + NH4(+). The catalysed reaction is 2'-deoxyadenosine + H2O + H(+) = 2'-deoxyinosine + NH4(+). Functionally, catalyzes the hydrolytic deamination of adenosine and 2-deoxyadenosine. The chain is Adenosine deaminase from Mycobacterium sp. (strain JLS).